We begin with the raw amino-acid sequence, 142 residues long: Large ribosomal subunit protein uL24 (142 aa).

Positions 1-11 (MKVNPFVSSDS) are enriched in polar residues. The interval 1 to 24 (MKVNPFVSSDSGKSRKAHFNAPSH) is disordered.

It belongs to the universal ribosomal protein uL24 family.

The sequence is that of Large ribosomal subunit protein uL24 (rpl-26) from Caenorhabditis elegans.